The sequence spans 133 residues: Putative elongation factor 1-delta-like protein (133 aa).

A compositionally biased stretch (low complexity) spans 58 to 73; sequence SLAGSLGPGASSGPSG. Disordered stretches follow at residues 58–77 and 89–133; these read SLAG…DHSE and NQRD…TSRG. The span at 89–102 shows a compositional bias: basic and acidic residues; the sequence is NQRDLAERAGEELA.

It belongs to the EF-1-beta/EF-1-delta family.

This Homo sapiens (Human) protein is Putative elongation factor 1-delta-like protein (EEF1DP3).